Here is a 481-residue protein sequence, read N- to C-terminus: Sestrin-1 (481 aa).

The tract at residues 63 to 244 (FADAFTDLGR…ICDITNGNHG (182 aa)) is N-terminal domain; may mediate the alkylhydroperoxide reductase activity. Residue Cys122 is the Cysteine sulfenic acid (-SOH) intermediate of the active site. Positions 295–316 (KTESMVFSTEDEDPPPDIDVSR) are disordered. The interval 310–481 (PDIDVSRHFE…ALRAITRYMT (172 aa)) is C-terminal domain; mediates TORC1 regulation. Residues 375–378 (TYNT), Thr387, and Glu452 contribute to the L-leucine site.

Belongs to the sestrin family.

Its subcellular location is the nucleus. The protein resides in the cytoplasm. It carries out the reaction a hydroperoxide + L-cysteinyl-[protein] = S-hydroxy-L-cysteinyl-[protein] + an alcohol. Functionally, may function as an intracellular leucine sensor that negatively regulates the TORC1 signaling pathway through the GATOR complex. In absence of leucine, binds the GATOR subcomplex GATOR2 and prevents TORC1 signaling. Binding of leucine to SESN2 disrupts its interaction with GATOR2 thereby activating the TORC1 signaling pathway. This stress-inducible metabolic regulator may also play a role in protection against oxidative and genotoxic stresses. May prevent the accumulation of reactive oxygen species (ROS) through the alkylhydroperoxide reductase activity born by the N-terminal domain of the protein. The polypeptide is Sestrin-1 (Xenopus laevis (African clawed frog)).